The chain runs to 100 residues: NADH-quinone oxidoreductase subunit K (100 aa).

3 helical membrane passes run 4-24 (LQHG…GLII), 29-49 (LFML…FVVV), and 60-80 (VMFI…LALL).

This sequence belongs to the complex I subunit 4L family. As to quaternary structure, NDH-1 is composed of 13 different subunits. Subunits NuoA, H, J, K, L, M, N constitute the membrane sector of the complex.

The protein localises to the cell inner membrane. The catalysed reaction is a quinone + NADH + 5 H(+)(in) = a quinol + NAD(+) + 4 H(+)(out). In terms of biological role, NDH-1 shuttles electrons from NADH, via FMN and iron-sulfur (Fe-S) centers, to quinones in the respiratory chain. The immediate electron acceptor for the enzyme in this species is believed to be ubiquinone. Couples the redox reaction to proton translocation (for every two electrons transferred, four hydrogen ions are translocated across the cytoplasmic membrane), and thus conserves the redox energy in a proton gradient. The protein is NADH-quinone oxidoreductase subunit K of Photorhabdus laumondii subsp. laumondii (strain DSM 15139 / CIP 105565 / TT01) (Photorhabdus luminescens subsp. laumondii).